The primary structure comprises 1416 residues: K homology domain-containing protein 4 (1416 aa).

Disordered stretches follow at residues 25–76 (NPNG…TSMR), 108–174 (KAEA…TRSS), 196–225 (VNSS…LSQS), 255–320 (QNDE…FPGR), and 341–385 (SSLN…MPKP). Low complexity-rich tracts occupy residues 196-213 (VNSS…SANH), 273-285 (QSSF…LDQL), and 341-350 (SSLNPPASGS). The segment covering 357–369 (GLSSAQPLRSPQP) has biased composition (polar residues). KH domains are found at residues 412-504 (FKST…VILD), 508-594 (GLRS…QVSM), 747-816 (FEVR…EELP), 817-892 (AEMS…SVME), and 900-968 (DYIS…DHVP). 2 disordered regions span residues 1215 to 1240 (AGVS…SGHR) and 1289 to 1416 (HASG…FDRA). Residues 1219–1239 (VPTSGGIQFPSQPSLHQQSGH) are compositionally biased toward polar residues. Residues 1343–1374 (QQQAQQQLQYQQQQQQQQQQQQQPGYGMPHQP) are compositionally biased toward low complexity. The segment covering 1391–1402 (RNTQNPDSTTMD) has biased composition (polar residues).

In terms of biological role, RNA-binding protein that recognizes the sequence AUACCC via its tandem KH domains 3 and 4, probably in order to promote mRNA instability. Plays an essential role in filamentous growth and virulence. The chain is K homology domain-containing protein 4 from Mycosarcoma maydis (Corn smut fungus).